A 641-amino-acid polypeptide reads, in one-letter code: Single-strand DNA endonuclease 1 (641 aa).

The tract at residues 1-90 is N-domain; that stretch reads MGVKNLWDIL…SLKLATYRRR (90 aa). The XPG-N domain stretch occupies residues 2–97; the sequence is GVKNLWDILE…RRRLGSISHA (96 aa). Residues D30, D76, E144, E146, D165, D167, and D217 each coordinate Mg(2+). Residues 132 to 217 form an XPG-I domain region; it reads MALGIPCLDG…ISLAVLLGSD (86 aa). I-domain regions lie at residues 132-220 and 132-221; these read MALG…DYSN and MALG…YSNG. Positions 217–350 are 5'-3' exonuclease domain; it reads DYSNGVNGFG…ILPKIAEREL (134 aa). 2 disordered regions span residues 428 to 448 and 572 to 615; these read KGEE…QAAV and VGSH…RVHH. Positions 580 to 590 are enriched in gly residues; it reads DGGGGGGGGVA.

This sequence belongs to the XPG/RAD2 endonuclease family. GEN subfamily. It depends on Mg(2+) as a cofactor. Highly expressed in shoot apical meristem (SAM) and young leaves. Expressed in roots, flag leaf and panicles.

The protein localises to the nucleus. Single-stranded DNA endonuclease activity in vitro. May not be active as double-stranded DNA endonuclease. Endonuclease which cleaves flap structures at the junction between single-stranded DNA and double-stranded DNA with a specific cleavage site in the 5' overhang strand exactly one nucleotide 3' of the branch point. Structure- and sequence-specific nuclease that resolves holliday junctions (HJs) by symmetrically oriented incisions in two opposing strands near the junction point, thus leading to ligatable products; HJs are physical links between homologous DNA molecules that arise as central intermediary structures during homologous recombination and repair in meiotic and somatic cells. Probably involved in the resolution of toxic replication structures to ensure genome stability, and to maintain telomere integrity and replication. The protein is Single-strand DNA endonuclease 1 of Oryza sativa subsp. japonica (Rice).